The sequence spans 178 residues: Putative type II secretion system M-type protein YghD (178 aa).

Over 1 to 39 the chain is Cytoplasmic; sequence MLRDKFIHYFQQWRERQLSRGEHWLAQHLAGRSPREKGM. The chain crosses the membrane as a helical span at residues 40 to 60; that stretch reads LLAAVVFLFSVGYYVLIWQPL. Residues 61–178 are Periplasmic-facing; it reads SERIEQQETI…NVQRLEFGRG (118 aa).

Belongs to the GSP M family.

It localises to the cell inner membrane. Its function is as follows. Involved in a type II secretion system (T2SS, formerly general secretion pathway, GSP) for the export of folded proteins across the outer membrane. The protein is Putative type II secretion system M-type protein YghD (yghD) of Escherichia coli (strain K12).